The following is a 584-amino-acid chain: PE-PGRS family protein PE_PGRS11 (584 aa).

The PE domain occupies 1–92 (MSFVIVARDA…AATSYAVTEV (92 aa)). The active-site Tele-phosphohistidine intermediate is His290. Glu365 (proton donor/acceptor) is an active-site residue. The interval 384-584 (YLVGPIAWTL…LPIGLPSLIP (201 aa)) is phosphoglycerate mutase.

This sequence in the N-terminal section; belongs to the mycobacterial PE family. PGRS subfamily. The protein in the C-terminal section; belongs to the phosphoglycerate mutase family. In terms of assembly, interacts with human TLR2. Mg(2+) serves as cofactor.

It is found in the secreted. It localises to the cell wall. The protein localises to the cell surface. It carries out the reaction (2R)-2-phosphoglycerate = (2R)-3-phosphoglycerate. Functionally, induces maturation and activation of human dendritic cells (DCs), via TLR2-dependent activation of ERK1/2, p38 MAPK, and NF-kappa-B signaling pathways, and enhances the ability of DCs to stimulate CD4(+) T cells. By activating DCs, could potentially contribute to the initiation of innate immune responses during tuberculosis infection and hence regulate the clinical course of tuberculosis. Involved in resistance to oxidative stress, via TLR2-dependent activation of the PI3K-ERK1/2-NF-kappa-B signaling pathway and expression of COX-2 and Bcl2. Also abolishes H(2)O(2)-triggered activation of p38 MAPK. This is PE-PGRS family protein PE_PGRS11 from Mycobacterium tuberculosis (strain ATCC 25618 / H37Rv).